The primary structure comprises 219 residues: Epididymal secretory glutathione peroxidase (219 aa).

A signal peptide spans methionine 1–threonine 21. The active site involves cysteine 71.

It belongs to the glutathione peroxidase family. As to quaternary structure, homotetramer. As to expression, proximal caput epididymis.

The protein resides in the secreted. The enzyme catalyses 2 glutathione + H2O2 = glutathione disulfide + 2 H2O. Its function is as follows. May constitute a glutathione peroxidase-like protective system against peroxide damage in sperm membrane lipids. Since the purified porcine enzyme has very little activity towards hydrogen peroxide or organic hydroperoxides the protective effect is not likely to be exerted by its enzymatic activity. Instead, may protect sperm from premature acrosome reaction in the epididymis by binding to lipid peroxides, which might otherwise interact with phospholipase A2 and induce the acrosome reaction. The protein is Epididymal secretory glutathione peroxidase (GPX5) of Sus scrofa (Pig).